A 173-amino-acid chain; its full sequence is Photosystem I assembly protein Ycf3 (173 aa).

3 TPR repeats span residues 35–68 (AFSY…EEDP), 72–105 (SYIL…NFKL), and 120–153 (GVQA…APDN).

It belongs to the Ycf3 family.

Its subcellular location is the plastid. The protein localises to the chloroplast thylakoid membrane. Essential for the assembly of the photosystem I (PSI) complex. May act as a chaperone-like factor to guide the assembly of the PSI subunits. The chain is Photosystem I assembly protein Ycf3 from Porphyra purpurea (Red seaweed).